The primary structure comprises 255 residues: tRNA1(Val) (adenine(37)-N6)-methyltransferase (255 aa).

It belongs to the methyltransferase superfamily. tRNA (adenine-N(6)-)-methyltransferase family.

Its subcellular location is the cytoplasm. It carries out the reaction adenosine(37) in tRNA1(Val) + S-adenosyl-L-methionine = N(6)-methyladenosine(37) in tRNA1(Val) + S-adenosyl-L-homocysteine + H(+). In terms of biological role, specifically methylates the adenine in position 37 of tRNA(1)(Val) (anticodon cmo5UAC). This is tRNA1(Val) (adenine(37)-N6)-methyltransferase from Porphyromonas gingivalis (strain ATCC BAA-308 / W83).